A 161-amino-acid polypeptide reads, in one-letter code: Phosphopantetheine adenylyltransferase (161 aa).

A substrate-binding site is contributed by Thr-11. Residues 11-12 and His-19 contribute to the ATP site; that span reads TF. Substrate-binding residues include Lys-43, Thr-75, and Arg-89. ATP-binding positions include 90–92, Glu-100, and 125–131; these read GLR and YSFLSSS.

The protein belongs to the bacterial CoaD family. In terms of assembly, homohexamer. It depends on Mg(2+) as a cofactor.

It localises to the cytoplasm. It catalyses the reaction (R)-4'-phosphopantetheine + ATP + H(+) = 3'-dephospho-CoA + diphosphate. It participates in cofactor biosynthesis; coenzyme A biosynthesis; CoA from (R)-pantothenate: step 4/5. Its function is as follows. Reversibly transfers an adenylyl group from ATP to 4'-phosphopantetheine, yielding dephospho-CoA (dPCoA) and pyrophosphate. This chain is Phosphopantetheine adenylyltransferase, found in Listeria welshimeri serovar 6b (strain ATCC 35897 / DSM 20650 / CCUG 15529 / CIP 8149 / NCTC 11857 / SLCC 5334 / V8).